A 1473-amino-acid polypeptide reads, in one-letter code: G8 domain-containing protein DDB_G0286311 (1473 aa).

The N-terminal stretch at Met-1–Ser-21 is a signal peptide. The helical transmembrane segment at Ile-105–Phe-125 threads the bilayer. A glycan (N-linked (GlcNAc...) asparagine) is linked at Asn-126. Residues Thr-130–Leu-150 form a helical membrane-spanning segment. Asn-203, Asn-241, and Asn-275 each carry an N-linked (GlcNAc...) asparagine glycan. Over residues Thr-298 to Thr-375 the composition is skewed to low complexity. Residues Thr-298–Ser-400 are disordered. Residues Asp-376–Ala-389 show a composition bias toward polar residues. The span at Ser-390 to Ser-400 shows a compositional bias: low complexity. Asn-444, Asn-637, Asn-680, Asn-1078, Asn-1088, Asn-1176, Asn-1206, Asn-1225, Asn-1389, and Asn-1424 each carry an N-linked (GlcNAc...) asparagine glycan. The G8 domain maps to Ser-626–Thr-754.

This sequence belongs to the comF family.

The protein localises to the membrane. The chain is G8 domain-containing protein DDB_G0286311 from Dictyostelium discoideum (Social amoeba).